The sequence spans 496 residues: Angiopoietin-2 (496 aa).

The first 18 residues, 1 to 18, serve as a signal peptide directing secretion; it reads MWQIVFFTLSCDLVLAAA. Residues N89, N119, N133, N151, N240, and N304 are each glycosylated (N-linked (GlcNAc...) asparagine). Positions 166–248 form a coiled coil; the sequence is STNKLEKQIL…VNNSVLQKQQ (83 aa). One can recognise a Fibrinogen C-terminal domain in the interval 275-495; the sequence is KEEQISFRDC…ATTMMIRPAD (221 aa). Cysteines 284 and 313 form a disulfide. Residues D429, D431, C433, and C435 each contribute to the Ca(2+) site. 2 disulfide bridges follow: C433–C435 and C437–C450.

As to quaternary structure, interacts with TEK/TIE2, competing for the same binding site as ANGPT1. Interacts with ITGA5. Interacts with SVEP1/polydom. Interacts with THBD; this interaction significantly inhibits the generation of activated PC and TAFIa/CPB2 by the thrombin/thrombomodulin complex.

The protein resides in the secreted. Binds to TEK/TIE2, competing for the ANGPT1 binding site, and modulating ANGPT1 signaling. Can induce tyrosine phosphorylation of TEK/TIE2 in the absence of ANGPT1. In the absence of angiogenic inducers, such as VEGF, ANGPT2-mediated loosening of cell-matrix contacts may induce endothelial cell apoptosis with consequent vascular regression. In concert with VEGF, it may facilitate endothelial cell migration and proliferation, thus serving as a permissive angiogenic signal. Involved in the regulation of lymphangiogenesis. The chain is Angiopoietin-2 (ANGPT2) from Homo sapiens (Human).